We begin with the raw amino-acid sequence, 1058 residues long: Carbamoyl phosphate synthase large chain (1058 aa).

Positions 1–401 are carboxyphosphate synthetic domain; the sequence is MPKRKDIQKI…SLLKACRSLE (401 aa). The ATP site is built by R129, R169, G175, G176, R208, I210, E215, G241, I242, H243, Q284, and E298. The region spanning 133 to 327 is the ATP-grasp 1 domain; the sequence is KQLMQELDQP…IAKLAAKIAV (195 aa). 3 residues coordinate Mg(2+): Q284, E298, and N300. Residues Q284, E298, and N300 each contribute to the Mn(2+) site. Residues 402-546 form an oligomerization domain region; it reads IGVCHNEMTS…YSTYELENES (145 aa). The carbamoyl phosphate synthetic domain stretch occupies residues 547-929; sequence VQSNKESILV…ALYKAFEANN (383 aa). Residues 671–861 form the ATP-grasp 2 domain; it reads EKALKELGIP…MAQIATKLIL (191 aa). Residues R707, S746, I748, E752, G777, V778, H779, S780, Q820, and E832 each coordinate ATP. Residues Q820, E832, and N834 each contribute to the Mg(2+) site. 3 residues coordinate Mn(2+): Q820, E832, and N834. The MGS-like domain occupies 930 to 1058; that stretch reads SHLSEFGQIV…ESRCFNIEAI (129 aa). The allosteric domain stretch occupies residues 930–1058; sequence SHLSEFGQIV…ESRCFNIEAI (129 aa).

The protein belongs to the CarB family. Composed of two chains; the small (or glutamine) chain promotes the hydrolysis of glutamine to ammonia, which is used by the large (or ammonia) chain to synthesize carbamoyl phosphate. Tetramer of heterodimers (alpha,beta)4. Mg(2+) serves as cofactor. It depends on Mn(2+) as a cofactor.

The enzyme catalyses hydrogencarbonate + L-glutamine + 2 ATP + H2O = carbamoyl phosphate + L-glutamate + 2 ADP + phosphate + 2 H(+). It carries out the reaction hydrogencarbonate + NH4(+) + 2 ATP = carbamoyl phosphate + 2 ADP + phosphate + 2 H(+). It functions in the pathway amino-acid biosynthesis; L-arginine biosynthesis; carbamoyl phosphate from bicarbonate: step 1/1. It participates in pyrimidine metabolism; UMP biosynthesis via de novo pathway; (S)-dihydroorotate from bicarbonate: step 1/3. Functionally, large subunit of the glutamine-dependent carbamoyl phosphate synthetase (CPSase). CPSase catalyzes the formation of carbamoyl phosphate from the ammonia moiety of glutamine, carbonate, and phosphate donated by ATP, constituting the first step of 2 biosynthetic pathways, one leading to arginine and/or urea and the other to pyrimidine nucleotides. The large subunit (synthetase) binds the substrates ammonia (free or transferred from glutamine from the small subunit), hydrogencarbonate and ATP and carries out an ATP-coupled ligase reaction, activating hydrogencarbonate by forming carboxy phosphate which reacts with ammonia to form carbamoyl phosphate. This chain is Carbamoyl phosphate synthase large chain, found in Streptococcus pyogenes serotype M18 (strain MGAS8232).